Reading from the N-terminus, the 148-residue chain is Large ribosomal subunit protein bL9 (148 aa).

Belongs to the bacterial ribosomal protein bL9 family.

Functionally, binds to the 23S rRNA. This chain is Large ribosomal subunit protein bL9, found in Agathobacter rectalis (strain ATCC 33656 / DSM 3377 / JCM 17463 / KCTC 5835 / VPI 0990) (Eubacterium rectale).